The sequence spans 372 residues: NAD(P)H-quinone oxidoreductase subunit 1 (372 aa).

The next 8 membrane-spanning stretches (helical) occupy residues 27-47 (LIWLPLPMLLVLVAAVVGVLV), 97-117 (LLFTLGPVLVVVPVILSWLIV), 128-148 (VGVGIFLWISLSSVQPIGLLM), 166-186 (AAQSISYEIPLALAVLAVVMM), 204-224 (ILSWNIWRQPVGFLIFWICAL), 266-286 (VLSALLVSVLYLGGWGFPVPV), 308-328 (ATGIVMTVLKAYLLVFIAILL), and 347-367 (FLLPLALVNLLVTAALKLAFP).

This sequence belongs to the complex I subunit 1 family. As to quaternary structure, NDH-1 is composed of at least 11 different subunits.

The protein localises to the cellular thylakoid membrane. The enzyme catalyses a plastoquinone + NADH + (n+1) H(+)(in) = a plastoquinol + NAD(+) + n H(+)(out). It carries out the reaction a plastoquinone + NADPH + (n+1) H(+)(in) = a plastoquinol + NADP(+) + n H(+)(out). NDH-1 shuttles electrons from an unknown electron donor, via FMN and iron-sulfur (Fe-S) centers, to quinones in the respiratory and/or the photosynthetic chain. The immediate electron acceptor for the enzyme in this species is believed to be plastoquinone. Couples the redox reaction to proton translocation, and thus conserves the redox energy in a proton gradient. The protein is NAD(P)H-quinone oxidoreductase subunit 1 of Synechococcus sp. (strain WH7803).